A 455-amino-acid polypeptide reads, in one-letter code: MHTIKLFLFVVPLVIASRVDPDLSSFDSAPSEPKSRFAMLDDVKILANGLLQLGHGLKDFVHKTKGQINDIFQKLNIFDQSFYDLSLRTNEIKEEEKELRRTTSTLQVKNEEVKNMSVELNSKLESLLEEKTALQHKVRALEEQLTNLILSPAGAQEHPEVTSLKSFVEQQDNSIRELLQSVEEQYKQLSQQHMQIKEIEKQLRKTGIQEPSENSLSSKSRAPRTTPPLQLNETENTEQDDLPADCSAVYNRGEHTSGVYTIKPRNSQGFNVYCDTQSGSPWTLIQHRKDGSQDFNETWENYEKGFGRLDGEFWLGLEKIYAIVQQSNYILRLELQDWKDSKHYVEYSFHLGSHETNYTLHVAEIAGNIPGALPEHTDLMFSTWNHRAKGQLYCPESYSGGWWWNDICGENNLNGKYNKPRTKSRPERRRGIYWRPQSRKLYAIKSSKMMLQPTT.

The signal sequence occupies residues 1–16 (MHTIKLFLFVVPLVIA). The sufficient to inhibit LPL lipase activity stretch occupies residues 17–165 (SRVDPDLSSF…QEHPEVTSLK (149 aa)). The interval 17 to 207 (SRVDPDLSSF…EIEKQLRKTG (191 aa)) is sufficient to inhibit LIPG/EL phospholipase activity. Residues 32-56 (EPKSRFAMLDDVKILANGLLQLGHG) form a required for inhibition of LPL lipase activity region. Residues 85–206 (LSLRTNEIKE…KEIEKQLRKT (122 aa)) are a coiled coil. Asn115 carries an N-linked (GlcNAc...) asparagine glycan. The tract at residues 202 to 242 (QLRKTGIQEPSENSLSSKSRAPRTTPPLQLNETENTEQDDL) is disordered. Over residues 209–220 (QEPSENSLSSKS) the composition is skewed to polar residues. A glycan (O-linked (GlcNAc) threonine) is linked at Thr226. The N-linked (GlcNAc...) asparagine glycan is linked to Asn232. In terms of domain architecture, Fibrinogen C-terminal spans 237–455 (TEQDDLPADC…SSKMMLQPTT (219 aa)). Cysteines 246 and 274 form a disulfide. N-linked (GlcNAc...) asparagine glycans are attached at residues Asn296 and Asn357. An intrachain disulfide couples Cys394 to Cys408.

In terms of assembly, interacts with ANGPTL8. Interacts with ITGB3. In terms of processing, in part proteolytically cleaved by proprotein convertases; proposed to be involved in activation. In primary hepatocytes is intracellularily predominantly processed by FURIN and extracellularily by FURIN and PCSK6/PACE4. In 18.5 dpc embryos 75% of protein is found to be processed compared to 25 % in adults. Predominantly expressed in liver, weakly expressed in kidney and lung. Expressed in podocytes (at protein level). Expressed in hypothalamic neurons (at protein level). Expressed in bone marrow sinusoidal endothelial cells (at protein level).

It is found in the secreted. The protein localises to the cell projection. The protein resides in the lamellipodium. Functionally, acts in part as a hepatokine that is involved in regulation of lipid and glucose metabolism. Proposed to play a role in the trafficking of energy substrates to either storage or oxidative tissues in response to food intake. Has a stimulatory effect on plasma triglycerides (TG), which is achieved by suppressing plasma TG clearance via inhibition of LPL activity; the function seems to be specific for the feeding conditions. The inhibition of LPL activity appears to be an indirect mechanism involving recruitment of proprotein convertases PCSK6 and FURIN to LPL leading to cleavage and dissociation of LPL from the cell surface; the function does not require ANGPTL3 proteolytic cleavage but seems to be mediated by the N-terminal domain, and is not inhibited by GPIHBP1. Can inhibit endothelial lipase, causing increased plasma levels of high density lipoprotein (HDL) cholesterol and phospholipids; the cleaved N-terminal domain is more efficient than the uncleaved proprotein. Can bind to adipocytes to activate lipolysis, releasing free fatty acids and glycerol. Suppresses LPL specifically in oxidative tissues which is required to route very low density lipoprotein (VLDL)-TG to white adipose tissue (WAT) for storage in response to food; the function may involve cooperation with circulating, liver-derived ANGPTL8 and ANGPTL4 expression in WAT. Contributes to lower plasma levels of low density lipoprotein (LDL)-cholesterol by a mechanism that is independent of the canonical pathway implicating APOE and LDLR. May stimulate hypothalamic LPL activity. Its function is as follows. Involved in angiogenesis. Binds to endothelial cells via integrin alpha-V/beta-3 (ITGAV:ITGB3), activates FAK, MAPK and Akt signaling pathways and induces cell adhesion and cell migration. May increase the motility of podocytes. Secreted from podocytes, may modulate properties of glomerular endothelial cells involving integrin alpha-V/beta-3 and Akt signaling. May induce actin filament rearrangements in podocytes implicating integrin alpha-V/beta-3 and Rac1 activation. Binds to hematopoietic stem cells (HSC) and is involved in the regulation of HSC activity probably implicating down-regulation of IKZF1/IKAROS. This Mus musculus (Mouse) protein is Angiopoietin-related protein 3 (Angptl3).